The following is a 356-amino-acid chain: MQTVLSLETSCDESAAALVKFNEGKFEILANSIASQANEHAKWGGVVPEIASRRHLESLPFLIQEVFSQSGINFSDVNAIAATVAPGLSGALLVGSVTARTLSCLHDLPFLGIHHLEGHLCSALLSENPPVPPYLVLLVSGGHTELIQVDRNFTYKRVGRSHDDAAGEAFDKVARLLGLSYPGGPAIEKFAKKGDPASFHFPKGRVSKPEGGFYPYDFSFSGLKTAVLRKVESIRSEGKQIPLANLAASFENVVSEVLVERSVKYAFDHGLHSLVMVGGVAANTCLRKMMVSKAEDKAIDVYMAPKAFCTDNAAMIGTAALVRLISGTSPSSLELGVSARFELDQSDLLYKSEPPF.

2 residues coordinate Fe cation: His115 and His119. Residues 138 to 142 (LVSGG), Asp171, Gly184, and Asn283 contribute to the substrate site. Residue Asp311 coordinates Fe cation.

Belongs to the KAE1 / TsaD family. Fe(2+) is required as a cofactor.

Its subcellular location is the cytoplasm. The enzyme catalyses L-threonylcarbamoyladenylate + adenosine(37) in tRNA = N(6)-L-threonylcarbamoyladenosine(37) in tRNA + AMP + H(+). Required for the formation of a threonylcarbamoyl group on adenosine at position 37 (t(6)A37) in tRNAs that read codons beginning with adenine. Is involved in the transfer of the threonylcarbamoyl moiety of threonylcarbamoyl-AMP (TC-AMP) to the N6 group of A37, together with TsaE and TsaB. TsaD likely plays a direct catalytic role in this reaction. The sequence is that of tRNA N6-adenosine threonylcarbamoyltransferase from Prochlorococcus marinus (strain SARG / CCMP1375 / SS120).